Reading from the N-terminus, the 384-residue chain is GDP-mannose transporter (384 aa).

At 1–40 the chain is on the cytoplasmic side; sequence MVEDKKTDDYTIEMDKMDQGSKNFEAAAPPPQPRTPPAGS. Residues 41-61 form a helical membrane-spanning segment; it reads ISNNPILPVLAYCGSSILMTV. Topologically, residues 62–69 are lumenal; the sequence is MNKYVLSG. Residues 70–90 form a helical membrane-spanning segment; sequence LDFNLNFFLLCVQSIVCIVAI. At 91–110 the chain is on the cytoplasmic side; it reads QTCKSCGLITYRDFSADEAR. Residues 111–127 traverse the membrane as a helical segment; it reads KWFPITLLLIGMIYTGS. The Lumenal portion of the chain corresponds to 128–134; that stretch reads KALQFLS. The chain crosses the membrane as a helical span at residues 135–151; sequence IPVYTIFKNLTIILIAY. The Cytoplasmic portion of the chain corresponds to 152 to 160; the sequence is GEVLWFGGS. The helical transmembrane segment at 161 to 182 threads the bilayer; that stretch reads VTGLTLFSFGLMVLSSIIAAWA. Over 183–200 the chain is Lumenal; the sequence is DIKHAVESTGDATAKVST. The helical transmembrane segment at 201–221 threads the bilayer; the sequence is LNAGYIWMLVNCLCTSSYVLG. At 222 to 236 the chain is on the cytoplasmic side; sequence MRKRIKLTNFKDFDT. The chain crosses the membrane as a helical span at residues 237 to 257; sequence LAMFYNNLLSIPVLIVLTGLM. The Lumenal segment spans residues 258–276; that stretch reads EDWSSANITRNFPPADRNN. Asn264 carries N-linked (GlcNAc...) asparagine glycosylation. Residues 277-297 form a helical membrane-spanning segment; it reads IIFAMILSGLSSVFISYTSAW. The Cytoplasmic segment spans residues 298–305; sequence CVRVTSST. The helical transmembrane segment at 306-326 threads the bilayer; it reads TYSMVGALNKLPIALSGLIFF. At 327–329 the chain is on the lumenal side; that stretch reads DAP. Residues 330-350 form a helical membrane-spanning segment; that stretch reads VTFPSVSAIVVGFVSGIVYAV. Topologically, residues 351 to 384 are cytoplasmic; sequence AKIKQNAKPKTGVLPMSNPPVSASSQSMRDSLRS. The disordered stretch occupies residues 364 to 384; that stretch reads LPMSNPPVSASSQSMRDSLRS. The span at 369-384 shows a compositional bias: polar residues; it reads PPVSASSQSMRDSLRS.

It belongs to the TPT transporter family. SLC35D subfamily. In terms of assembly, homooligomer.

It localises to the golgi apparatus membrane. Its subcellular location is the cytoplasmic vesicle membrane. It is found in the endoplasmic reticulum membrane. In terms of biological role, involved in the import of GDP-mannose from the cytoplasm into the Golgi lumen. The sequence is that of GDP-mannose transporter (gmt1) from Aspergillus terreus (strain NIH 2624 / FGSC A1156).